The following is a 1637-amino-acid chain: Probable serine/threonine-protein kinase gdt2 (1637 aa).

The N-terminal stretch at 1–19 (MNYILYILLILIIFSINNT) is a signal peptide. The Extracellular segment spans residues 20-896 (FSIGSFVYTP…IPVEKINLLP (877 aa)). A helical transmembrane segment spans residues 897 to 917 (IIVPICVTVLVLLSILIVFFG). Residues 918–1637 (ARYYKHKKRR…NNNNNNNNNN (720 aa)) are Cytoplasmic-facing. Polar residues predominate over residues 977-990 (SDIQTQSENNNLEP). Positions 977–1000 (SDIQTQSENNNLEPTTVETTTTTT) are disordered. Residues 991-1000 (TTVETTTTTT) show a composition bias toward low complexity. The 258-residue stretch at 1290-1547 (IIIKNYISEG…LSKYLKHLLK (258 aa)) folds into the Protein kinase domain. ATP is bound by residues 1296–1304 (ISEGTFGIV) and K1317. The Proton acceptor role is filled by D1408. A disordered region spans residues 1557–1637 (DKDKKNKKKN…NNNNNNNNNN (81 aa)). 2 stretches are compositionally biased toward low complexity: residues 1568-1589 (NNNN…NNNN) and 1597-1637 (NNNI…NNNN).

This sequence in the N-terminal section; belongs to the GDT family. It in the C-terminal section; belongs to the protein kinase superfamily. TKL Ser/Thr protein kinase family.

Its subcellular location is the membrane. The enzyme catalyses L-seryl-[protein] + ATP = O-phospho-L-seryl-[protein] + ADP + H(+). It catalyses the reaction L-threonyl-[protein] + ATP = O-phospho-L-threonyl-[protein] + ADP + H(+). In terms of biological role, regulates the transition between growth and differentiation. The protein is Probable serine/threonine-protein kinase gdt2 (gdt2) of Dictyostelium discoideum (Social amoeba).